Consider the following 90-residue polypeptide: MPRRVLTGRVTSDKMDKTVTVLLDRRIMHPLYKKFIRRSKKYAAHDEENVCQTGDLVRIEECAPISKRKTWSVVSRNGEDLASASSSVSA.

The protein belongs to the universal ribosomal protein uS17 family. As to quaternary structure, part of the 30S ribosomal subunit.

Functionally, one of the primary rRNA binding proteins, it binds specifically to the 5'-end of 16S ribosomal RNA. The polypeptide is Small ribosomal subunit protein uS17 (Gluconobacter oxydans (strain 621H) (Gluconobacter suboxydans)).